The following is a 111-amino-acid chain: Translation initiation factor 1A 1 (111 aa).

The segment at 1-26 is disordered; sequence MTLADLKKPTSRATPSTEETFTRVRT. In terms of domain architecture, S1-like spans 22 to 96; it reads TRVRTPRREN…EKADVIWKYT (75 aa).

It belongs to the eIF-1A family.

Its function is as follows. Seems to be required for maximal rate of protein biosynthesis. Enhances ribosome dissociation into subunits and stabilizes the binding of the initiator Met-tRNA(I) to 40 S ribosomal subunits. This chain is Translation initiation factor 1A 1 (eIF1A1), found in Methanosarcina acetivorans (strain ATCC 35395 / DSM 2834 / JCM 12185 / C2A).